The chain runs to 64 residues: Large ribosomal subunit protein bL35 (64 aa).

The interval 17–41 is disordered; sequence TGSGKVKRERMNGSHNLEHKNRKRT. Residues 25–35 show a composition bias toward basic and acidic residues; that stretch reads ERMNGSHNLEH.

The protein belongs to the bacterial ribosomal protein bL35 family.

The sequence is that of Large ribosomal subunit protein bL35 from Chlorobaculum parvum (strain DSM 263 / NCIMB 8327) (Chlorobium vibrioforme subsp. thiosulfatophilum).